Reading from the N-terminus, the 408-residue chain is Arginine deiminase (408 aa).

C397 acts as the Amidino-cysteine intermediate in catalysis.

Belongs to the arginine deiminase family.

The protein localises to the cytoplasm. The catalysed reaction is L-arginine + H2O = L-citrulline + NH4(+). It functions in the pathway amino-acid degradation; L-arginine degradation via ADI pathway; carbamoyl phosphate from L-arginine: step 1/2. This chain is Arginine deiminase, found in Listeria innocua serovar 6a (strain ATCC BAA-680 / CLIP 11262).